The primary structure comprises 778 residues: Endonuclease MutS2 (778 aa).

An ATP-binding site is contributed by 328 to 335 (GPNTGGKT). Residues 702–777 (LDLRGKRYEE…GSGATIVTFK (76 aa)) enclose the Smr domain.

Belongs to the DNA mismatch repair MutS family. MutS2 subfamily. In terms of assembly, homodimer. Binds to stalled ribosomes, contacting rRNA.

Endonuclease that is involved in the suppression of homologous recombination and thus may have a key role in the control of bacterial genetic diversity. Its function is as follows. Acts as a ribosome collision sensor, splitting the ribosome into its 2 subunits. Detects stalled/collided 70S ribosomes which it binds and splits by an ATP-hydrolysis driven conformational change. Acts upstream of the ribosome quality control system (RQC), a ribosome-associated complex that mediates the extraction of incompletely synthesized nascent chains from stalled ribosomes and their subsequent degradation. Probably generates substrates for RQC. The protein is Endonuclease MutS2 of Streptococcus pneumoniae (strain ATCC 700669 / Spain 23F-1).